Reading from the N-terminus, the 302-residue chain is Sulfotransferase 1C4 (302 aa).

Residue Lys55 to Trp60 coordinates 3'-phosphoadenylyl sulfate. Lys113–His115 is a binding site for substrate. His115 serves as the catalytic Proton acceptor. Residues Arg137, Ser145, Tyr200, Thr234–Met239, and Phe262–Gly266 each bind 3'-phosphoadenylyl sulfate.

Belongs to the sulfotransferase 1 family. In terms of tissue distribution, expressed in liver, kidney and jejunum.

The protein localises to the cytoplasm. It is found in the cytosol. The enzyme catalyses a phenol + 3'-phosphoadenylyl sulfate = an aryl sulfate + adenosine 3',5'-bisphosphate + H(+). It carries out the reaction 17beta-estradiol + 3'-phosphoadenylyl sulfate = 17beta-estradiol 3-sulfate + adenosine 3',5'-bisphosphate + H(+). The catalysed reaction is bisphenol A + 3'-phosphoadenylyl sulfate = bisphenyl A sulfate + adenosine 3',5'-bisphosphate + H(+). Functionally, sulfotransferase that utilizes 3'-phospho-5'-adenylyl sulfate (PAPS) as sulfonate donor to catalyze the sulfate conjugation of phenolic compounds and estrogen (E2). Can also sulfonate estrogenic compounds, however, the dietary flavonoids (phytoestrogen) and environmental estrogens, like bisphenol A are better substrates than 17beta-estradiol (E2). The sequence is that of Sulfotransferase 1C4 (SULT1C4) from Macaca fascicularis (Crab-eating macaque).